The following is a 507-amino-acid chain: GMP synthase [glutamine-hydrolyzing] (507 aa).

One can recognise a Glutamine amidotransferase type-1 domain in the interval 3-190 (KILVIDYGSQ…IQGICGLKGS (188 aa)). C77 serves as the catalytic Nucleophile. Catalysis depends on residues H164 and E166. A GMPS ATP-PPase domain is found at 191-382 (WTLMDFVENK…LGLPREILYR (192 aa)). Residue 218 to 224 (SGGVDSS) participates in ATP binding.

In terms of assembly, homodimer.

The catalysed reaction is XMP + L-glutamine + ATP + H2O = GMP + L-glutamate + AMP + diphosphate + 2 H(+). Its pathway is purine metabolism; GMP biosynthesis; GMP from XMP (L-Gln route): step 1/1. Functionally, catalyzes the synthesis of GMP from XMP. The protein is GMP synthase [glutamine-hydrolyzing] of Petrotoga mobilis (strain DSM 10674 / SJ95).